The chain runs to 550 residues: Dihydroxy-acid dehydratase (550 aa).

D81 contributes to the Mg(2+) binding site. C122 serves as a coordination point for [2Fe-2S] cluster. Mg(2+)-binding residues include D123 and K124. K124 carries the N6-carboxylysine modification. Position 194 (C194) interacts with [2Fe-2S] cluster. E442 is a Mg(2+) binding site. Catalysis depends on S467, which acts as the Proton acceptor.

Belongs to the IlvD/Edd family. Homodimer. [2Fe-2S] cluster serves as cofactor. The cofactor is Mg(2+).

It carries out the reaction (2R)-2,3-dihydroxy-3-methylbutanoate = 3-methyl-2-oxobutanoate + H2O. The enzyme catalyses (2R,3R)-2,3-dihydroxy-3-methylpentanoate = (S)-3-methyl-2-oxopentanoate + H2O. The protein operates within amino-acid biosynthesis; L-isoleucine biosynthesis; L-isoleucine from 2-oxobutanoate: step 3/4. Its pathway is amino-acid biosynthesis; L-valine biosynthesis; L-valine from pyruvate: step 3/4. Functions in the biosynthesis of branched-chain amino acids. Catalyzes the dehydration of (2R,3R)-2,3-dihydroxy-3-methylpentanoate (2,3-dihydroxy-3-methylvalerate) into 2-oxo-3-methylpentanoate (2-oxo-3-methylvalerate) and of (2R)-2,3-dihydroxy-3-methylbutanoate (2,3-dihydroxyisovalerate) into 2-oxo-3-methylbutanoate (2-oxoisovalerate), the penultimate precursor to L-isoleucine and L-valine, respectively. The protein is Dihydroxy-acid dehydratase of Methanoregula boonei (strain DSM 21154 / JCM 14090 / 6A8).